Here is a 397-residue protein sequence, read N- to C-terminus: Oxygen-dependent coproporphyrinogen-III oxidase, chloroplastic (397 aa).

Residues 76-95 (ESDMGSNVTSNSSSVRGRFE) are disordered. Over residues 79 to 90 (MGSNVTSNSSSV) the composition is skewed to polar residues. Positions 135–144 (VLQDGAVFEK) are important for dimerization. Serine 185 contributes to the substrate binding site. Catalysis depends on histidine 199, which acts as the Proton donor. Residues 201 to 203 (NYR) and 355 to 360 (GGRIES) each bind substrate. Positions 337–372 (YVEFNLVYDRGTTFGLKTGGRIESILVSLPLTARWE) are important for dimerization.

The protein belongs to the aerobic coproporphyrinogen-III oxidase family. As to quaternary structure, homodimer.

The protein resides in the plastid. Its subcellular location is the chloroplast. The enzyme catalyses coproporphyrinogen III + O2 + 2 H(+) = protoporphyrinogen IX + 2 CO2 + 2 H2O. The protein operates within porphyrin-containing compound metabolism; protoporphyrin-IX biosynthesis; protoporphyrinogen-IX from coproporphyrinogen-III (O2 route): step 1/1. Functionally, involved in the heme and chlorophyll biosynthesis. Catalyzes the aerobic oxidative decarboxylation of propionate groups of rings A and B of coproporphyrinogen-III to yield the vinyl groups in protoporphyrinogen-IX. The sequence is that of Oxygen-dependent coproporphyrinogen-III oxidase, chloroplastic (CPX) from Nicotiana tabacum (Common tobacco).